Consider the following 203-residue polypeptide: MKKLIISCCLLATFSAAGAWADAAGDLQQRLDKVKSFHATFSQKVTDGSGTSVQDGEGEMWVQRPNLFNWHMITPDESILISDGKTLWFYNPFVEQASASLLKDATSNTPFMLIARNQASDWKQYHVAQKGDDFSLTPKSADGNLKQFTINVAQNGTINQFSAVEQDGQRSNYALKSQQSGPISADKFKFRPPKGVTVDDQRQ.

The signal sequence occupies residues M1 to A21. The tract at residues A174–Q203 is disordered.

It belongs to the LolA family. As to quaternary structure, monomer.

It localises to the periplasm. Participates in the translocation of lipoproteins from the inner membrane to the outer membrane. Only forms a complex with a lipoprotein if the residue after the N-terminal Cys is not an aspartate (The Asp acts as a targeting signal to indicate that the lipoprotein should stay in the inner membrane). This Erwinia tasmaniensis (strain DSM 17950 / CFBP 7177 / CIP 109463 / NCPPB 4357 / Et1/99) protein is Outer-membrane lipoprotein carrier protein.